A 2121-amino-acid polypeptide reads, in one-letter code: PAM2 domain-containing protein UPA2 (2121 aa).

Residues 1–17 (MEGSSLNVAAPVFKPSG) carry the PAM2 1 motif. Disordered regions lie at residues 14–46 (KPSGAANSFTPAPSQPAPPTLLSSSGPDAAVHA), 262–302 (QPED…SALT), 375–397 (AATTDHEPRSPLAHQGIPLPPST), 475–507 (ARRRGDSSDLNLRPSLKTTHNHTMSLGLPSSGG), 522–543 (ANSDEGPSKPPSEAQDLPQKPL), and 586–819 (DLGR…QFSR). Positions 339–599 (PWPYSLGLPD…GFGYEPQSPN (261 aa)) are effector domain. Residues 596 to 607 (QSPNAAPNGTTS) are compositionally biased toward polar residues. Composition is skewed to acidic residues over residues 626 to 637 (EENDELGFDGEE) and 646 to 658 (EDADASDFEEEPN). The span at 679-689 (DGHDRYADDNQ) shows a compositional bias: basic and acidic residues. The segment covering 690–712 (SHASNDDSLQDSLTPSDEQFSNP) has biased composition (polar residues). Residues 719 to 735 (REERILRRQHRAAERAA) are compositionally biased toward basic and acidic residues. Positions 736–745 (RRERKQRQRG) are enriched in basic residues. Composition is skewed to polar residues over residues 749–758 (SDNTLPSSSI) and 777–788 (NPRNGNTISNPS). Short sequence motifs (PAM2) lie at residues 858–874 (SGISLLNPDAKEFKFGG) and 920–937 (TNAAHLNVGAAPFTPGLF). Over residues 950-960 (NSLSASPSIAV) the composition is skewed to polar residues. The segment at 950–1012 (NSLSASPSIA…PSPPRPKASA (63 aa)) is disordered. A compositionally biased stretch (basic and acidic residues) spans 966-981 (GADHRETENRDMQGRE). The PAM2 4 signature appears at 1046-1063 (SHESRLTADAPSFVPTWA). Disordered regions lie at residues 1076–1096 (KRPSLPDWDQQGQQAVDKDLP), 1119–1261 (SKDD…EEES), and 1337–1369 (SHARRASDETQSTIRPLRQRNSSSDVKTANSSL). A compositionally biased stretch (polar residues) spans 1198–1207 (HSPSISQTSD). A compositionally biased stretch (acidic residues) spans 1248–1261 (GGNDEDDYEDEEES). A compositionally biased stretch (polar residues) spans 1345-1369 (ETQSTIRPLRQRNSSSDVKTANSSL). Residues 1783-2054 (LEKQAQANAD…EAKLQTLTAS (272 aa)) adopt a coiled-coil conformation. The disordered stretch occupies residues 2099–2121 (SFASTAGSQGKKEVEVDEGGWWS). A GWW motif is present at residues 2118–2120 (GWW).

It belongs to the UPA1 PAM2 domain-binding protein family. As to quaternary structure, might form homodimers via its C-terminal coiled-coil domain. Part of large ribonucleoprotein complexes (mRNPs) containing RNA-binding proteins RRM4 and PAB1, endosome-binding protein UPA1, core scaffold protein UPA2 and associated factor GRP1. Interacts (via PAM2 motifs) with PAB1.

The protein resides in the cytoplasm. It is found in the cytoskeleton. Its subcellular location is the endosome. In terms of biological role, core component of endosomal mRNA transport and appears to carry out crucial scaffolding functions. The endosomal mRNA transport regulates polarity of the infectious hyphae by transporting a broad spectrum of cargo mRNAs from the nucleus to cell poles. The chain is PAM2 domain-containing protein UPA2 from Mycosarcoma maydis (Corn smut fungus).